A 25-amino-acid polypeptide reads, in one-letter code: Galactose-binding lectin-2 (25 aa).

In terms of assembly, homodimer. N-glycosylated.

Functionally, D-galactose specific lectin. Binds in decreasing order of affinity: melibiose, N-acetyllactosamine, D-galacturonic acid, D-galactose, methyl-alpha-D-galactoside, D-galactose, methyl-alpha-D-galactopyranoside, methyl-beta-D-galactopyranoside and lactose. Binds also the glycoproteins globotriose, asialofetuin and mucin. Possesses glycan-dependent cytotoxic activity against Burkitt's lymphoma Raji cells and erythroleukemia K562 cells. Has calcium-independent hemagglutinating activity towards human erythrocytes. This Aplysia kurodai (Kuroda's sea hare) protein is Galactose-binding lectin-2.